A 270-amino-acid polypeptide reads, in one-letter code: ATP synthase subunit a 1 (270 aa).

The next 5 helical transmembrane spans lie at 38 to 58 (VHID…GIFY), 98 to 118 (IAPL…MDLV), 143 to 163 (DVNI…YYSI), 208 to 228 (LFGN…MLPW), and 239 to 259 (AIFH…LTIV).

This sequence belongs to the ATPase A chain family. F-type ATPases have 2 components, CF(1) - the catalytic core - and CF(0) - the membrane proton channel. CF(1) has five subunits: alpha(3), beta(3), gamma(1), delta(1), epsilon(1). CF(0) has three main subunits: a(1), b(2) and c(9-12). The alpha and beta chains form an alternating ring which encloses part of the gamma chain. CF(1) is attached to CF(0) by a central stalk formed by the gamma and epsilon chains, while a peripheral stalk is formed by the delta and b chains.

The protein localises to the cell inner membrane. Functionally, key component of the proton channel; it plays a direct role in the translocation of protons across the membrane. The protein is ATP synthase subunit a 1 of Vibrio campbellii (strain ATCC BAA-1116).